A 430-amino-acid polypeptide reads, in one-letter code: Glucose-6-phosphate isomerase (430 aa).

Glu284 acts as the Proton donor in catalysis. Catalysis depends on residues His305 and Lys420.

The protein belongs to the GPI family.

Its subcellular location is the cytoplasm. It catalyses the reaction alpha-D-glucose 6-phosphate = beta-D-fructose 6-phosphate. The protein operates within carbohydrate biosynthesis; gluconeogenesis. It participates in carbohydrate degradation; glycolysis; D-glyceraldehyde 3-phosphate and glycerone phosphate from D-glucose: step 2/4. Catalyzes the reversible isomerization of glucose-6-phosphate to fructose-6-phosphate. The chain is Glucose-6-phosphate isomerase from Mycoplasma pneumoniae (strain ATCC 29342 / M129 / Subtype 1) (Mycoplasmoides pneumoniae).